A 176-amino-acid chain; its full sequence is Peptidyl-tRNA hydrolase (176 aa).

Y14 is a binding site for tRNA. H19 serves as the catalytic Proton acceptor. Y65, N67, and N113 together coordinate tRNA.

This sequence belongs to the PTH family. Monomer.

Its subcellular location is the cytoplasm. It catalyses the reaction an N-acyl-L-alpha-aminoacyl-tRNA + H2O = an N-acyl-L-amino acid + a tRNA + H(+). Hydrolyzes ribosome-free peptidyl-tRNAs (with 1 or more amino acids incorporated), which drop off the ribosome during protein synthesis, or as a result of ribosome stalling. In terms of biological role, catalyzes the release of premature peptidyl moieties from peptidyl-tRNA molecules trapped in stalled 50S ribosomal subunits, and thus maintains levels of free tRNAs and 50S ribosomes. This is Peptidyl-tRNA hydrolase from Phytoplasma mali (strain AT).